Reading from the N-terminus, the 251-residue chain is MRKKVIAGNWKMNKTLEEGLSLASEVANMAKDEVPADVNLVMCIPYISLAAVSKVINDKVAIGAQNVYQKESGAFTGEISAPMLKSVGVKYVIIGHSERREYFGETNQQLADKVTISLANGLTPLFCCGETLAQREAGIHINFVNAQLTESLFHLSPEDFKKVVIAYEPIWAIGTGVTASDEQAQEMHAKIREHLASKYGAAVADEISILYGGSMKPDNAKGLLACKDIDGGLIGGASLKSRDFIDIAKSY.

Substrate is bound at residue 9–11; the sequence is NWK. His-96 serves as the catalytic Electrophile. The active-site Proton acceptor is Glu-168. Substrate is bound by residues Gly-174, Ser-214, and 235–236; that span reads GG.

Belongs to the triosephosphate isomerase family. As to quaternary structure, homodimer.

The protein resides in the cytoplasm. It catalyses the reaction D-glyceraldehyde 3-phosphate = dihydroxyacetone phosphate. It participates in carbohydrate biosynthesis; gluconeogenesis. It functions in the pathway carbohydrate degradation; glycolysis; D-glyceraldehyde 3-phosphate from glycerone phosphate: step 1/1. Its function is as follows. Involved in the gluconeogenesis. Catalyzes stereospecifically the conversion of dihydroxyacetone phosphate (DHAP) to D-glyceraldehyde-3-phosphate (G3P). The polypeptide is Triosephosphate isomerase (Cytophaga hutchinsonii (strain ATCC 33406 / DSM 1761 / CIP 103989 / NBRC 15051 / NCIMB 9469 / D465)).